Reading from the N-terminus, the 370-residue chain is Putative 8-amino-7-oxononanoate synthase (370 aa).

A substrate-binding site is contributed by R20. 95-96 (GY) contacts pyridoxal 5'-phosphate. Position 120 (H120) interacts with substrate. Pyridoxal 5'-phosphate contacts are provided by residues S167, 192-195 (DDAH), and 223-226 (TLSK). K226 bears the N6-(pyridoxal phosphate)lysine mark. Residue T337 participates in substrate binding.

It belongs to the class-II pyridoxal-phosphate-dependent aminotransferase family. BioF subfamily. In terms of assembly, homodimer. Requires pyridoxal 5'-phosphate as cofactor.

It catalyses the reaction 6-carboxyhexanoyl-[ACP] + L-alanine + H(+) = (8S)-8-amino-7-oxononanoate + holo-[ACP] + CO2. Its pathway is cofactor biosynthesis; biotin biosynthesis. Its function is as follows. Catalyzes the decarboxylative condensation of pimeloyl-[acyl-carrier protein] and L-alanine to produce 8-amino-7-oxononanoate (AON), [acyl-carrier protein], and carbon dioxide. The polypeptide is Putative 8-amino-7-oxononanoate synthase (bioF) (Methanococcus vannielii (strain ATCC 35089 / DSM 1224 / JCM 13029 / OCM 148 / SB)).